Consider the following 262-residue polypeptide: Acyl-[acyl-carrier-protein]--UDP-N-acetylglucosamine O-acyltransferase (262 aa).

It belongs to the transferase hexapeptide repeat family. LpxA subfamily. Homotrimer.

It localises to the cytoplasm. The catalysed reaction is a (3R)-hydroxyacyl-[ACP] + UDP-N-acetyl-alpha-D-glucosamine = a UDP-3-O-[(3R)-3-hydroxyacyl]-N-acetyl-alpha-D-glucosamine + holo-[ACP]. It participates in glycolipid biosynthesis; lipid IV(A) biosynthesis; lipid IV(A) from (3R)-3-hydroxytetradecanoyl-[acyl-carrier-protein] and UDP-N-acetyl-alpha-D-glucosamine: step 1/6. Functionally, involved in the biosynthesis of lipid A, a phosphorylated glycolipid that anchors the lipopolysaccharide to the outer membrane of the cell. The polypeptide is Acyl-[acyl-carrier-protein]--UDP-N-acetylglucosamine O-acyltransferase (Salmonella paratyphi B (strain ATCC BAA-1250 / SPB7)).